The primary structure comprises 69 residues: Large ribosomal subunit protein bL28 (69 aa).

Belongs to the bacterial ribosomal protein bL28 family.

This Nitratidesulfovibrio vulgaris (strain ATCC 29579 / DSM 644 / CCUG 34227 / NCIMB 8303 / VKM B-1760 / Hildenborough) (Desulfovibrio vulgaris) protein is Large ribosomal subunit protein bL28.